Reading from the N-terminus, the 89-residue chain is Small ribosomal subunit protein uS15 (89 aa).

This sequence belongs to the universal ribosomal protein uS15 family. Part of the 30S ribosomal subunit. Forms a bridge to the 50S subunit in the 70S ribosome, contacting the 23S rRNA.

In terms of biological role, one of the primary rRNA binding proteins, it binds directly to 16S rRNA where it helps nucleate assembly of the platform of the 30S subunit by binding and bridging several RNA helices of the 16S rRNA. Functionally, forms an intersubunit bridge (bridge B4) with the 23S rRNA of the 50S subunit in the ribosome. This is Small ribosomal subunit protein uS15 from Chlamydia pneumoniae (Chlamydophila pneumoniae).